Reading from the N-terminus, the 359-residue chain is Phospho-N-acetylmuramoyl-pentapeptide-transferase (359 aa).

10 helical membrane passes run 26–46 (TIYAAITALIICFLLGPWLIR), 75–95 (GGVLIIFAVVVSTLLWANLTI), 97–117 (YVWLVLMVTLGYGLIGFADDY), 134–154 (LACEVCIALLVSVVLYAKPGF), 166–186 (VLPDLGWGYIFLSTFIIVGAA), 197–217 (GLAIGPAITCFMTYLLFAYFA), 233–253 (GVGELSIFCGAIVGAGIGFLW), 261–281 (VFMGDTGSLSLGGALGCLAIV), 286–306 (ILLAIVGGIFVLETFSVIFQV), and 336–356 (KVIVRFWIISILLALLAISTL).

The protein belongs to the glycosyltransferase 4 family. MraY subfamily. Mg(2+) serves as cofactor.

Its subcellular location is the cell inner membrane. It catalyses the reaction UDP-N-acetyl-alpha-D-muramoyl-L-alanyl-gamma-D-glutamyl-meso-2,6-diaminopimeloyl-D-alanyl-D-alanine + di-trans,octa-cis-undecaprenyl phosphate = di-trans,octa-cis-undecaprenyl diphospho-N-acetyl-alpha-D-muramoyl-L-alanyl-D-glutamyl-meso-2,6-diaminopimeloyl-D-alanyl-D-alanine + UMP. Its pathway is cell wall biogenesis; peptidoglycan biosynthesis. Its function is as follows. Catalyzes the initial step of the lipid cycle reactions in the biosynthesis of the cell wall peptidoglycan: transfers peptidoglycan precursor phospho-MurNAc-pentapeptide from UDP-MurNAc-pentapeptide onto the lipid carrier undecaprenyl phosphate, yielding undecaprenyl-pyrophosphoryl-MurNAc-pentapeptide, known as lipid I. This chain is Phospho-N-acetylmuramoyl-pentapeptide-transferase, found in Syntrophus aciditrophicus (strain SB).